We begin with the raw amino-acid sequence, 118 residues long: UPF0329 protein ECU03_0030/ECU05_0040/ECU06_0010/ECU06_1710/ECU11_0010 (118 aa).

The protein belongs to the UPF0329 family.

The protein is UPF0329 protein ECU03_0030/ECU05_0040/ECU06_0010/ECU06_1710/ECU11_0010 of Encephalitozoon cuniculi (strain GB-M1) (Microsporidian parasite).